We begin with the raw amino-acid sequence, 274 residues long: Bis(5'-nucleosyl)-tetraphosphatase, symmetrical (274 aa).

The protein belongs to the Ap4A hydrolase family.

It catalyses the reaction P(1),P(4)-bis(5'-adenosyl) tetraphosphate + H2O = 2 ADP + 2 H(+). Functionally, hydrolyzes diadenosine 5',5'''-P1,P4-tetraphosphate to yield ADP. In Shewanella sp. (strain ANA-3), this protein is Bis(5'-nucleosyl)-tetraphosphatase, symmetrical.